A 691-amino-acid polypeptide reads, in one-letter code: Methionine--tRNA ligase (691 aa).

The 'HIGH' region motif lies at 14-24; that stretch reads PYANGPFHLGH. Positions 148, 151, 161, and 164 each coordinate Zn(2+). The short motif at 344–348 is the 'KMSKS' region element; the sequence is KMSKS. ATP is bound at residue Lys347. Residues 585–691 form the tRNA-binding domain; the sequence is DFDRVDLRVA…PGAKPGMRVR (107 aa).

This sequence belongs to the class-I aminoacyl-tRNA synthetase family. MetG type 1 subfamily. As to quaternary structure, homodimer. Zn(2+) is required as a cofactor.

It localises to the cytoplasm. It catalyses the reaction tRNA(Met) + L-methionine + ATP = L-methionyl-tRNA(Met) + AMP + diphosphate. In terms of biological role, is required not only for elongation of protein synthesis but also for the initiation of all mRNA translation through initiator tRNA(fMet) aminoacylation. The sequence is that of Methionine--tRNA ligase from Verminephrobacter eiseniae (strain EF01-2).